Reading from the N-terminus, the 34-residue chain is uncharacterized protein (34 aa).

This is an uncharacterized protein from Rhizobium radiobacter (Agrobacterium tumefaciens).